We begin with the raw amino-acid sequence, 422 residues long: ORC1-type DNA replication protein 13 (422 aa).

ATP-binding positions include 80 to 84, Tyr231, and Arg243; that span reads TGKTL.

This sequence belongs to the CDC6/cdc18 family.

In terms of biological role, involved in regulation of DNA replication. The sequence is that of ORC1-type DNA replication protein 13 (cdc6m) from Haloarcula marismortui (strain ATCC 43049 / DSM 3752 / JCM 8966 / VKM B-1809) (Halobacterium marismortui).